A 235-amino-acid polypeptide reads, in one-letter code: Pyridoxine 5'-phosphate synthase (235 aa).

N6 provides a ligand contact to 3-amino-2-oxopropyl phosphate. 1-deoxy-D-xylulose 5-phosphate is bound at residue 8–9; that stretch reads DH. R17 provides a ligand contact to 3-amino-2-oxopropyl phosphate. The active-site Proton acceptor is the H42. Residues R44 and H49 each coordinate 1-deoxy-D-xylulose 5-phosphate. Residue E69 is the Proton acceptor of the active site. T99 serves as a coordination point for 1-deoxy-D-xylulose 5-phosphate. H189 serves as the catalytic Proton donor. 3-amino-2-oxopropyl phosphate is bound by residues G190 and 211–212; that span reads GH.

Belongs to the PNP synthase family. Homooctamer; tetramer of dimers.

The protein resides in the cytoplasm. The enzyme catalyses 3-amino-2-oxopropyl phosphate + 1-deoxy-D-xylulose 5-phosphate = pyridoxine 5'-phosphate + phosphate + 2 H2O + H(+). It functions in the pathway cofactor biosynthesis; pyridoxine 5'-phosphate biosynthesis; pyridoxine 5'-phosphate from D-erythrose 4-phosphate: step 5/5. In terms of biological role, catalyzes the complicated ring closure reaction between the two acyclic compounds 1-deoxy-D-xylulose-5-phosphate (DXP) and 3-amino-2-oxopropyl phosphate (1-amino-acetone-3-phosphate or AAP) to form pyridoxine 5'-phosphate (PNP) and inorganic phosphate. This is Pyridoxine 5'-phosphate synthase from Chlorobium luteolum (strain DSM 273 / BCRC 81028 / 2530) (Pelodictyon luteolum).